A 271-amino-acid polypeptide reads, in one-letter code: Thiazole synthase (271 aa).

The active-site Schiff-base intermediate with DXP is the Lys-108. Residues Gly-169, 195–196, and 217–218 each bind 1-deoxy-D-xylulose 5-phosphate; these read AG and NS.

It belongs to the ThiG family. In terms of assembly, homotetramer. Forms heterodimers with either ThiH or ThiS.

The protein resides in the cytoplasm. The catalysed reaction is [ThiS sulfur-carrier protein]-C-terminal-Gly-aminoethanethioate + 2-iminoacetate + 1-deoxy-D-xylulose 5-phosphate = [ThiS sulfur-carrier protein]-C-terminal Gly-Gly + 2-[(2R,5Z)-2-carboxy-4-methylthiazol-5(2H)-ylidene]ethyl phosphate + 2 H2O + H(+). Its pathway is cofactor biosynthesis; thiamine diphosphate biosynthesis. Catalyzes the rearrangement of 1-deoxy-D-xylulose 5-phosphate (DXP) to produce the thiazole phosphate moiety of thiamine. Sulfur is provided by the thiocarboxylate moiety of the carrier protein ThiS. In vitro, sulfur can be provided by H(2)S. The sequence is that of Thiazole synthase from Prochlorococcus marinus (strain SARG / CCMP1375 / SS120).